A 480-amino-acid polypeptide reads, in one-letter code: Glutamyl-tRNA(Gln) amidotransferase subunit A (480 aa).

Active-site charge relay system residues include Lys-74 and Ser-149. The Acyl-ester intermediate role is filled by Ser-173.

Belongs to the amidase family. GatA subfamily. As to quaternary structure, heterotrimer of A, B and C subunits.

The enzyme catalyses L-glutamyl-tRNA(Gln) + L-glutamine + ATP + H2O = L-glutaminyl-tRNA(Gln) + L-glutamate + ADP + phosphate + H(+). In terms of biological role, allows the formation of correctly charged Gln-tRNA(Gln) through the transamidation of misacylated Glu-tRNA(Gln) in organisms which lack glutaminyl-tRNA synthetase. The reaction takes place in the presence of glutamine and ATP through an activated gamma-phospho-Glu-tRNA(Gln). This is Glutamyl-tRNA(Gln) amidotransferase subunit A from Ruthia magnifica subsp. Calyptogena magnifica.